We begin with the raw amino-acid sequence, 966 residues long: SH3 domain-binding protein 4 (966 aa).

In terms of domain architecture, SH3 1 spans Gly57–Tyr116. Residues Thr322–Val457 form the ZU5 domain. Residues Asn657–Lys727 enclose the SH3 2 domain.

As to quaternary structure, homodimer or homooligomer.

It localises to the membrane. It is found in the clathrin-coated pit. The protein localises to the cytoplasmic vesicle. The protein resides in the clathrin-coated vesicle. Its subcellular location is the nucleus. Its function is as follows. Possible role in regulating endocytosis of the transferrin receptor at the plasma membrane. Alternatively, may function as a negative regulator of the amino acid-induced TOR signaling by inhibiting the formation of active Rag GTPase complexes. Preferentially binds inactive Rag GTPase complexes and prevents their interaction with the mTORC1 complex inhibiting its relocalization to lysosomes and its activation. Thereby, may indirectly regulate cell growth, proliferation and autophagy. This is SH3 domain-binding protein 4 (sh3bp4) from Seriola quinqueradiata (Five-ray yellowtail).